The primary structure comprises 362 residues: sn-glycerol-3-phosphate import ATP-binding protein UgpC (362 aa).

An ABC transporter domain is found at 4-235 (LKLQAVTKSY…PATLFVASFI (232 aa)). 37–44 (GPSGCGKS) contributes to the ATP binding site.

Belongs to the ABC transporter superfamily. sn-glycerol-3-phosphate importer (TC 3.A.1.1.3) family. The complex is composed of two ATP-binding proteins (UgpC), two transmembrane proteins (UgpA and UgpE) and a solute-binding protein (UgpB).

Its subcellular location is the cell inner membrane. It carries out the reaction sn-glycerol 3-phosphate(out) + ATP + H2O = sn-glycerol 3-phosphate(in) + ADP + phosphate + H(+). Functionally, part of the ABC transporter complex UgpBAEC involved in sn-glycerol-3-phosphate (G3P) import. Responsible for energy coupling to the transport system. The sequence is that of sn-glycerol-3-phosphate import ATP-binding protein UgpC from Yersinia enterocolitica serotype O:8 / biotype 1B (strain NCTC 13174 / 8081).